Reading from the N-terminus, the 395-residue chain is Acid ceramidase (395 aa).

The first 20 residues, 1–20 (MLGWSRLTFILLSGIVTCLV), serve as a signal peptide directing secretion. C31 and C340 are joined by a disulfide. Residue C143 is the Nucleophile of the active site. N-linked (GlcNAc...) asparagine glycosylation is found at N195, N259, N286, and N342. C388 and C392 are disulfide-bonded.

The protein belongs to the acid ceramidase family. As to quaternary structure, heterodimer; disulfide-linked. The heterodimer is composed of the disulfide-linked alpha and beta chains produced by autocatalytic cleavage of the precursor. N-glycosylated. Post-translationally, proteolytically cleaved into two chains alpha and beta that remain associated via a disulfide bond. Cleavage gives rise to a conformation change that activates the enzyme. The same catalytic Cys residue mediates the autoproteolytic cleavage and subsequent hydrolysis of lipid substrates. The beta chain may undergo an additional C-terminal processing.

The protein localises to the lysosome. It is found in the secreted. It carries out the reaction an N-acylsphing-4-enine + H2O = sphing-4-enine + a fatty acid. The catalysed reaction is N-dodecanoylsphing-4-enine + H2O = dodecanoate + sphing-4-enine. It catalyses the reaction N-tetradecanoylsphing-4-enine + H2O = tetradecanoate + sphing-4-enine. The enzyme catalyses N-hexadecanoylsphing-4-enine + H2O = sphing-4-enine + hexadecanoate. It carries out the reaction N-octadecanoylsphing-4-enine + H2O = sphing-4-enine + octadecanoate. The catalysed reaction is N-dodecanoyl-(4R)-hydroxysphinganine + H2O = (4R)-hydroxysphinganine + dodecanoate. It catalyses the reaction N-(dodecanoyl)-sphinganine + H2O = dodecanoate + sphinganine. The enzyme catalyses N-(acetyl)-sphing-4-enine + H2O = sphing-4-enine + acetate. It carries out the reaction N-(hexanoyl)sphing-4-enine + H2O = hexanoate + sphing-4-enine. The catalysed reaction is N-octanoylsphing-4-enine + H2O = octanoate + sphing-4-enine. It catalyses the reaction N-(9Z-octadecenoyl)-sphing-4-enine + H2O = sphing-4-enine + (9Z)-octadecenoate. The enzyme catalyses N-dodecanoylethanolamine + H2O = dodecanoate + ethanolamine. It participates in lipid metabolism; sphingolipid metabolism. Lysosomal ceramidase that hydrolyzes sphingolipid ceramides into sphingosine and free fatty acids at acidic pH. Ceramides, sphingosine, and its phosphorylated form sphingosine-1-phosphate are bioactive lipids that mediate cellular signaling pathways regulating several biological processes including cell proliferation, apoptosis and differentiation. Has a higher catalytic efficiency towards C12-ceramides versus other ceramides. Also catalyzes the reverse reaction allowing the synthesis of ceramides from fatty acids and sphingosine. For the reverse synthetic reaction, the natural sphingosine D-erythro isomer is more efficiently utilized as a substrate compared to D-erythro-dihydrosphingosine and D-erythro-phytosphingosine, while the fatty acids with chain lengths of 12 or 14 carbons are the most efficiently used. Also has an N-acylethanolamine hydrolase activity. By regulating the levels of ceramides, sphingosine and sphingosine-1-phosphate in the epidermis, mediates the calcium-induced differentiation of epidermal keratinocytes. Also indirectly regulates tumor necrosis factor/TNF-induced apoptosis. By regulating the intracellular balance between ceramides and sphingosine, in adrenocortical cells, probably also acts as a regulator of steroidogenesis. The chain is Acid ceramidase from Bos taurus (Bovine).